Here is a 126-residue protein sequence, read N- to C-terminus: Non-specific lipid-transfer protein 15 (126 aa).

Positions 1–22 (MSKSIFVVCITLLVVLSPTLNA) are cleaved as a signal peptide. 4 disulfide bridges follow: Cys34–Cys80, Cys45–Cys57, Cys58–Cys100, and Cys78–Cys114.

This sequence belongs to the plant LTP family.

In terms of biological role, plant non-specific lipid-transfer proteins transfer phospholipids as well as galactolipids across membranes. May play a role in wax or cutin deposition in the cell walls of expanding epidermal cells and certain secretory tissues. This chain is Non-specific lipid-transfer protein 15 (LTP15), found in Arabidopsis thaliana (Mouse-ear cress).